The following is a 228-amino-acid chain: Protein Thf1 (228 aa).

The stretch at 201-223 forms a coiled coil; that stretch reads IKRSKEVVDELSQTERRKREERA. Residues 209–228 are disordered; the sequence is DELSQTERRKREERAVSQPG.

It belongs to the THF1 family.

Functionally, may be involved in photosynthetic membrane biogenesis. This Gloeobacter violaceus (strain ATCC 29082 / PCC 7421) protein is Protein Thf1.